Consider the following 602-residue polypeptide: Elongation factor 4 (602 aa).

The tr-type G domain occupies 7–189 (KHIRNFSIVA…AIVDKIPSPQ (183 aa)). GTP contacts are provided by residues 19–24 (DHGKST) and 136–139 (NKID).

Belongs to the TRAFAC class translation factor GTPase superfamily. Classic translation factor GTPase family. LepA subfamily.

It is found in the cell membrane. The catalysed reaction is GTP + H2O = GDP + phosphate + H(+). Its function is as follows. Required for accurate and efficient protein synthesis under certain stress conditions. May act as a fidelity factor of the translation reaction, by catalyzing a one-codon backward translocation of tRNAs on improperly translocated ribosomes. Back-translocation proceeds from a post-translocation (POST) complex to a pre-translocation (PRE) complex, thus giving elongation factor G a second chance to translocate the tRNAs correctly. Binds to ribosomes in a GTP-dependent manner. This is Elongation factor 4 from Clostridium kluyveri (strain ATCC 8527 / DSM 555 / NBRC 12016 / NCIMB 10680 / K1).